A 272-amino-acid chain; its full sequence is MKRTAFFISDGTGITAETLGQSLLAQFENITFTKLTRPYIDTAEKARAMVQQINNAAEKDGGRPIIFDTLVNQEIRDILAESNGFMIDIFSSFLAPLEHELMSRSSYSVGKSHSISHNTNYMERIEAVNFALDNDDGARTRYYDKADLILVGVSRCGKTPTCLYMAMQYGIRAANYPLTEDDMERLQLPSALKEYKDKLFGLTIDPDRLAAIRNERKPNSRYASFAQCEFEVREVENLFRRENINFINSTHFSVEEISAKILVEKGVERRLK.

152-159 (GVSRCGKT) is a binding site for ADP.

It belongs to the pyruvate, phosphate/water dikinase regulatory protein family. PSRP subfamily.

It carries out the reaction [pyruvate, water dikinase] + ADP = [pyruvate, water dikinase]-phosphate + AMP + H(+). It catalyses the reaction [pyruvate, water dikinase]-phosphate + phosphate + H(+) = [pyruvate, water dikinase] + diphosphate. In terms of biological role, bifunctional serine/threonine kinase and phosphorylase involved in the regulation of the phosphoenolpyruvate synthase (PEPS) by catalyzing its phosphorylation/dephosphorylation. The sequence is that of Putative phosphoenolpyruvate synthase regulatory protein from Stutzerimonas stutzeri (strain A1501) (Pseudomonas stutzeri).